Consider the following 98-residue polypeptide: NADH-ubiquinone oxidoreductase chain 4L (98 aa).

3 helical membrane-spanning segments follow: residues 1-21, 29-49, and 59-79; these read MSIV…GTLL, SLMC…LISL, and VPLI…ALLV.

This sequence belongs to the complex I subunit 4L family. In terms of assembly, core subunit of respiratory chain NADH dehydrogenase (Complex I) which is composed of 45 different subunits.

It localises to the mitochondrion inner membrane. It carries out the reaction a ubiquinone + NADH + 5 H(+)(in) = a ubiquinol + NAD(+) + 4 H(+)(out). Core subunit of the mitochondrial membrane respiratory chain NADH dehydrogenase (Complex I) which catalyzes electron transfer from NADH through the respiratory chain, using ubiquinone as an electron acceptor. Part of the enzyme membrane arm which is embedded in the lipid bilayer and involved in proton translocation. This chain is NADH-ubiquinone oxidoreductase chain 4L (MT-ND4L), found in Hemiechinus auritus (Long-eared hedgehog).